A 126-amino-acid polypeptide reads, in one-letter code: Small ribosomal subunit protein bS16 (126 aa).

Positions 87–126 are disordered; that stretch reads ARSNPEKALPGKRALERVAEKKQKAEDAAAAAAAEASAAE. Positions 99–113 are enriched in basic and acidic residues; sequence RALERVAEKKQKAED. The segment covering 114-126 has biased composition (low complexity); sequence AAAAAAAEASAAE.

Belongs to the bacterial ribosomal protein bS16 family.

The protein is Small ribosomal subunit protein bS16 of Agrobacterium fabrum (strain C58 / ATCC 33970) (Agrobacterium tumefaciens (strain C58)).